Reading from the N-terminus, the 757-residue chain is Probable phospholipase C20G8.02, mitochondrial (757 aa).

Residues 1–13 constitute a mitochondrion transit peptide; the sequence is MILYIVLPFYVRT. Residues 289–330 are disordered; the sequence is ESNSKPSTPVPTEELTSTTLLNDSSDPSDNFTPSNTESTIDL. Over residues 302–329 the composition is skewed to polar residues; sequence ELTSTTLLNDSSDPSDNFTPSNTESTID. Residue Ser-524 is part of the active site. The DDHD domain maps to 547 to 757; sequence LDFPVANFFA…LAHFILTQLL (211 aa).

The protein belongs to the PA-PLA1 family.

It localises to the mitochondrion. Functionally, probable phospholipase that hydrolyzes phosphatidic acid. The protein is Probable phospholipase C20G8.02, mitochondrial of Schizosaccharomyces pombe (strain 972 / ATCC 24843) (Fission yeast).